The chain runs to 2038 residues: Fer-1-like protein 5 (2038 aa).

C2 domains are found at residues 1–100 (MLRV…MFVR), 145–265 (TQKK…TLLR), 307–424 (QNTR…QGMY), 1055–1186 (TPED…FTPL), 1225–1345 (IPCK…SLNY), 1467–1587 (PKPP…ARCG), and 1705–1853 (GPPG…KQCS). Ca(2+) is bound by residues D1502, D1508, D1557, F1558, D1559, D1565, D1824, S1827, and D1830. Residues 1961–1981 (IICLVVTLVIGFILLNFVYSA) form a helical membrane-spanning segment.

The protein belongs to the ferlin family. As to quaternary structure, interacts (via second C2 domain) with EHD1 and EHD2. The cofactor is Ca(2+). Expressed in differentiating myoblasts and myotubes.

It is found in the cell membrane. It localises to the membrane. Plays a role in myoblast fusion; probable mediator of endocytic recycling for membrane trafficking events during myotube formation. This Mus musculus (Mouse) protein is Fer-1-like protein 5 (Fer1l5).